A 499-amino-acid chain; its full sequence is Protein NODULATION SIGNALING PATHWAY 2 (499 aa).

The interval 64 to 106 (NNTGPAFSDHTASTTSEEEEEEEATTTTMTTTTTTTTTTPEAA) is disordered. Low complexity predominate over residues 88–104 (TTTTMTTTTTTTTTTPE). The 386-residue stretch at 106-491 (ADDDFKGLRL…RRLLSASLWT (386 aa)) folds into the GRAS domain. The leucine repeat I (LRI) stretch occupies residues 113-182 (LRLVHLLMAG…AGGAYNSSSK (70 aa)). A VHIID region spans residues 201-265 (FQLLQDMSPY…PNGPHLRITA (65 aa)). The VHIID signature appears at 232–236 (VHIVD). The tract at residues 281–313 (ETGRRLTAFATSLGQPFSFHHSRLESDETFRPA) is leucine repeat II (LRII). Residues 323–414 (LVFNCMLNLP…RVFLGPRIVG (92 aa)) are PFYRE. The tract at residues 417-491 (ARIYRTGGGG…RRLLSASLWT (75 aa)) is SAW.

The protein belongs to the GRAS family. As to quaternary structure, interacts with IPN2. Binds to RAD1. Interacts with RAM1. In terms of tissue distribution, highly expressed in roots.

It is found in the nucleus membrane. Its subcellular location is the endoplasmic reticulum. Its function is as follows. Transcriptional regulator essential for Nod-factor-induced gene expression. Acts downstream of calcium spiking and a calcium/calmodulin-dependent protein kinase required for activation of early nodulation gene expression. Transcription factor involved in the induction of NIN and ENOD40 genes, which are required for rhizobial infection and early nodule development. Does not seem to contribute to the early steps of the arbuscular mycorrhizal fungus infection and colonization processes in roots. Transcription factor involved in the positive regulation of the beta-carotene isomerase D27, which participates in a pathway leading to biosynthesis of strigolactones in roots. The chain is Protein NODULATION SIGNALING PATHWAY 2 from Lotus japonicus (Lotus corniculatus var. japonicus).